A 397-amino-acid polypeptide reads, in one-letter code: Phosphoglycerate kinase (397 aa).

Substrate is bound by residues 21 to 23, Arg-37, 60 to 63, Arg-119, and Arg-152; these read DFN and HLGR. ATP-binding positions include Lys-203, Gly-294, Glu-325, and 354–357; that span reads GGDS.

It belongs to the phosphoglycerate kinase family. As to quaternary structure, monomer.

Its subcellular location is the cytoplasm. The catalysed reaction is (2R)-3-phosphoglycerate + ATP = (2R)-3-phospho-glyceroyl phosphate + ADP. It functions in the pathway carbohydrate degradation; glycolysis; pyruvate from D-glyceraldehyde 3-phosphate: step 2/5. In Chlorobium phaeobacteroides (strain BS1), this protein is Phosphoglycerate kinase.